The following is a 546-amino-acid chain: Putative serine hydroxymethyltransferase, mitochondrial (546 aa).

Residues 1–64 (MSSFQSTAAV…RFSSSSIAND (64 aa)) constitute a mitochondrion transit peptide. Lysine 305 bears the N6-(pyridoxal phosphate)lysine mark.

It belongs to the SHMT family. In terms of assembly, homotetramer. Pyridoxal 5'-phosphate is required as a cofactor.

It is found in the mitochondrion. It catalyses the reaction (6R)-5,10-methylene-5,6,7,8-tetrahydrofolate + glycine + H2O = (6S)-5,6,7,8-tetrahydrofolate + L-serine. It functions in the pathway one-carbon metabolism; tetrahydrofolate interconversion. Interconversion of serine and glycine. In Neurospora crassa (strain ATCC 24698 / 74-OR23-1A / CBS 708.71 / DSM 1257 / FGSC 987), this protein is Putative serine hydroxymethyltransferase, mitochondrial (cbs-2).